We begin with the raw amino-acid sequence, 345 residues long: Cysteinyl leukotriene receptor 2 (345 aa).

Topologically, residues 1-43 (MERKLMSLLPSISLSEMEPNSTLGNHNSNRSCTTENFKREFYP) are extracellular. N-linked (GlcNAc...) asparagine glycans are attached at residues Asn20 and Asn29. The chain crosses the membrane as a helical span at residues 44–64 (IVYLVIFIWGALGNGFSIYVF). The Cytoplasmic segment spans residues 65 to 73 (LKPYKKSTS). Residues 74 to 94 (VNVFMLNLAISDLLFTITLPF) traverse the membrane as a helical segment. The Extracellular segment spans residues 95 to 124 (RVDYYLRGSNXIFGDTPCRIMSYSMYVNMY). The cysteines at positions 112 and 188 are disulfide-linked. The helical transmembrane segment at 125–145 (SSIYFLTVLSVVRFLATVHPF) threads the bilayer. Residues 146–154 (RLLHTTSIK) lie on the Cytoplasmic side of the membrane. Residues 155–175 (NAWILCGVIWIFIMASSTVLL) traverse the membrane as a helical segment. Topologically, residues 176 to 205 (KNGSEQKDNVTLCLELNSNKVTKLKTMNYV) are extracellular. 2 N-linked (GlcNAc...) asparagine glycosylation sites follow: Asn177 and Asn184. A helical transmembrane segment spans residues 206-226 (ALVVGFVLPFGTLSICYLLII). Over 227–246 (RALLKVEVPESGLRLSHRKA) the chain is Cytoplasmic. Residues 247 to 267 (LITVIIALIIFLLCFLPYHVL) traverse the membrane as a helical segment. The Extracellular portion of the chain corresponds to 268–287 (RTLHLLEWKADKCKDRLHKA). Residues 288–308 (VAVTLALAAANSCFNPFLYYF) traverse the membrane as a helical segment. Over 309 to 345 (AGENFKDRLKSALRKGRPQKTRCGFSVCVWLKKETRV) the chain is Cytoplasmic.

Belongs to the G-protein coupled receptor 1 family.

Its subcellular location is the cell membrane. In terms of biological role, receptor for cysteinyl leukotrienes. The response is mediated via a G-protein that activates a phosphatidylinositol-calcium second messenger system. The protein is Cysteinyl leukotriene receptor 2 (CYSLTR2) of Sus scrofa (Pig).